Consider the following 233-residue polypeptide: LexA repressor (233 aa).

A DNA-binding region (H-T-H motif) is located at residues 26–46 (FDEMKDALDLRSKSGIHRLIT). Residues serine 154 and lysine 192 each act as for autocatalytic cleavage activity in the active site.

Belongs to the peptidase S24 family. Homodimer.

It catalyses the reaction Hydrolysis of Ala-|-Gly bond in repressor LexA.. In terms of biological role, represses a number of genes involved in the response to DNA damage (SOS response), including recA and lexA. In the presence of single-stranded DNA, RecA interacts with LexA causing an autocatalytic cleavage which disrupts the DNA-binding part of LexA, leading to derepression of the SOS regulon and eventually DNA repair. This Nitrobacter hamburgensis (strain DSM 10229 / NCIMB 13809 / X14) protein is LexA repressor.